We begin with the raw amino-acid sequence, 304 residues long: Tyrosine recombinase XerC (304 aa).

Residues 6–92 (NKLYLQAQAY…VLRQWFAYLV (87 aa)) enclose the Core-binding (CB) domain. A Tyr recombinase domain is found at 113-292 (HLPKNIDAER…DFQHLAKIYD (180 aa)). Active-site residues include Arg-152, Lys-176, His-244, Arg-247, and His-270. The O-(3'-phospho-DNA)-tyrosine intermediate role is filled by Tyr-279.

The protein belongs to the 'phage' integrase family. XerC subfamily. As to quaternary structure, forms a cyclic heterotetrameric complex composed of two molecules of XerC and two molecules of XerD.

The protein localises to the cytoplasm. Its function is as follows. Site-specific tyrosine recombinase, which acts by catalyzing the cutting and rejoining of the recombining DNA molecules. The XerC-XerD complex is essential to convert dimers of the bacterial chromosome into monomers to permit their segregation at cell division. It also contributes to the segregational stability of plasmids. This chain is Tyrosine recombinase XerC, found in Haemophilus ducreyi (strain 35000HP / ATCC 700724).